The sequence spans 521 residues: D-aminoacyl-tRNA deacylase (521 aa).

Disordered regions lie at residues 323 to 353 and 499 to 521; these read AVGTVHTKDSTDIDTGTNHNVDAERTESEDS and VFSTSSSSSSSSSSSSSSSSSSS. Residues 343-353 show a composition bias toward basic and acidic residues; the sequence is VDAERTESEDS. A compositionally biased stretch (low complexity) spans 501–521; sequence STSSSSSSSSSSSSSSSSSSS.

The protein belongs to the DtdA deacylase family. As to quaternary structure, monomer. The cofactor is Zn(2+).

The enzyme catalyses a D-aminoacyl-tRNA + H2O = a tRNA + a D-alpha-amino acid + H(+). It catalyses the reaction glycyl-tRNA(Ala) + H2O = tRNA(Ala) + glycine + H(+). Functionally, D-aminoacyl-tRNA deacylase with broad substrate specificity. By recycling D-aminoacyl-tRNA to D-amino acids and free tRNA molecules, this enzyme counteracts the toxicity associated with the formation of D-aminoacyl-tRNA entities in vivo. This Haloquadratum walsbyi (strain DSM 16790 / HBSQ001) protein is D-aminoacyl-tRNA deacylase.